The chain runs to 242 residues: MKVSLFITCLSDVFFPEVGKSVVEIMNQCGVELDFPEGQTCCGQPAYNSGYQEDAKLAAKQMIKAFEHSEYIVTPSGSCASMVHHYYKEMFKGDSEWYEKAVHLADRTYELTDFLVNVLGKNNWKSKLVEKAVFHQSCHMSRALGIKEEPLKLLSQVEGLDIKELPYCQDCCGFGGTFAVKMSSISETMVDEKIKHIEATEANLLIGADMGCLMNIGGRLRRKNKNIQVLHVAEVLAKGLSK.

It belongs to the LutA/YkgE family.

Is involved in L-lactate degradation and allows cells to grow with lactate as the sole carbon source. This is Lactate utilization protein A 2 from Bacillus cereus (strain Q1).